Reading from the N-terminus, the 233-residue chain is Lipoprotein-releasing system ATP-binding protein LolD (233 aa).

The region spanning 6–233 is the ABC transporter domain; it reads LQCDNLCKRY…TAELSLMGAE (228 aa). 42-49 lines the ATP pocket; that stretch reads GSSGSGKS.

Belongs to the ABC transporter superfamily. Lipoprotein translocase (TC 3.A.1.125) family. The complex is composed of two ATP-binding proteins (LolD) and two transmembrane proteins (LolC and LolE).

Its subcellular location is the cell inner membrane. In terms of biological role, part of the ABC transporter complex LolCDE involved in the translocation of mature outer membrane-directed lipoproteins, from the inner membrane to the periplasmic chaperone, LolA. Responsible for the formation of the LolA-lipoprotein complex in an ATP-dependent manner. The sequence is that of Lipoprotein-releasing system ATP-binding protein LolD from Shigella boydii serotype 4 (strain Sb227).